The following is a 77-amino-acid chain: Rhodotorucin-A peptides type 2 (77 aa).

The propeptide occupies 1–3 (MVA). A lipid anchor (S-farnesyl cysteine) is attached at C14. The propeptide occupies 15 to 18 (TVAK). C29 carries the S-farnesyl cysteine lipid modification. Residues 30-33 (TVSK) constitute a propeptide that is removed on maturation. C44 carries S-farnesyl cysteine lipidation. The propeptide occupies 45-48 (TVSK). A lipid anchor (S-farnesyl cysteine) is attached at C59. The propeptide occupies 60–63 (TVSK). The S-farnesyl cysteine moiety is linked to residue C74. Residues 75-77 (TVA) constitute a propeptide that is removed on maturation.

The protein localises to the cell membrane. In terms of biological role, rhodotorucin-A is a mating pheromone in cells of mating type A of Rhodosporidium toruloides. The sequence is that of Rhodotorucin-A peptides type 2 (RHA2) from Rhodotorula toruloides (Yeast).